The chain runs to 189 residues: Elongation factor P (189 aa).

Lysine 34 is modified (N6-(3,6-diaminohexanoyl)-5-hydroxylysine).

This sequence belongs to the elongation factor P family. In terms of processing, may be beta-lysylated on the epsilon-amino group of Lys-34 by the combined action of EpmA and EpmB, and then hydroxylated on the C5 position of the same residue by EpmC (if this protein is present). Lysylation is critical for the stimulatory effect of EF-P on peptide-bond formation. The lysylation moiety may extend toward the peptidyltransferase center and stabilize the terminal 3-CCA end of the tRNA. Hydroxylation of the C5 position on Lys-34 may allow additional potential stabilizing hydrogen-bond interactions with the P-tRNA.

It localises to the cytoplasm. It participates in protein biosynthesis; polypeptide chain elongation. Its function is as follows. Involved in peptide bond synthesis. Alleviates ribosome stalling that occurs when 3 or more consecutive Pro residues or the sequence PPG is present in a protein, possibly by augmenting the peptidyl transferase activity of the ribosome. Modification of Lys-34 is required for alleviation. The protein is Elongation factor P of Francisella tularensis subsp. novicida (strain U112).